We begin with the raw amino-acid sequence, 321 residues long: NADH-quinone oxidoreductase subunit H (321 aa).

The next 8 membrane-spanning stretches (helical) occupy residues 9-29 (LLAI…GAYM), 78-98 (IIFT…FAIM), 111-131 (IGIL…LLGG), 156-176 (FLGL…ISTI), 183-203 (IWNI…GLAI), 234-254 (FFIG…TLFF), 262-282 (LPPY…FILI), and 296-316 (ILGW…TAIV).

This sequence belongs to the complex I subunit 1 family. NDH-1 is composed of 14 different subunits. Subunits NuoA, H, J, K, L, M, N constitute the membrane sector of the complex.

The protein localises to the cell membrane. The enzyme catalyses a quinone + NADH + 5 H(+)(in) = a quinol + NAD(+) + 4 H(+)(out). In terms of biological role, NDH-1 shuttles electrons from NADH, via FMN and iron-sulfur (Fe-S) centers, to quinones in the respiratory chain. The immediate electron acceptor for the enzyme in this species is believed to be ubiquinone. Couples the redox reaction to proton translocation (for every two electrons transferred, four hydrogen ions are translocated across the cytoplasmic membrane), and thus conserves the redox energy in a proton gradient. This subunit may bind ubiquinone. This is NADH-quinone oxidoreductase subunit H from Baumannia cicadellinicola subsp. Homalodisca coagulata.